Reading from the N-terminus, the 344-residue chain is Phosphate acyltransferase (344 aa).

This sequence belongs to the PlsX family. As to quaternary structure, homodimer. Probably interacts with PlsY.

The protein resides in the cytoplasm. It carries out the reaction a fatty acyl-[ACP] + phosphate = an acyl phosphate + holo-[ACP]. It functions in the pathway lipid metabolism; phospholipid metabolism. Functionally, catalyzes the reversible formation of acyl-phosphate (acyl-PO(4)) from acyl-[acyl-carrier-protein] (acyl-ACP). This enzyme utilizes acyl-ACP as fatty acyl donor, but not acyl-CoA. The polypeptide is Phosphate acyltransferase (Sphingopyxis alaskensis (strain DSM 13593 / LMG 18877 / RB2256) (Sphingomonas alaskensis)).